Reading from the N-terminus, the 1318-residue chain is 1-phosphatidylinositol 4,5-bisphosphate phosphodiesterase classes I and II (1318 aa).

In terms of domain architecture, PI-PLC X-box spans 318-466 (DDMDQPMSHY…LRRKIIIKNK (149 aa)). Active-site residues include H333 and H378. Substrate is bound by residues K464 and K466. Residues 466 to 481 (KKKHHHHHHHHHHKKP) are compositionally biased toward basic residues. 2 disordered regions span residues 466–489 (KKKH…TPAA) and 505–594 (QQVG…KETE). Low complexity-rich tracts occupy residues 528–543 (ATGT…AGHA) and 554–563 (KDSTGSSDSD). Residues 571–580 (LPNTTPNLPS) show a composition bias toward polar residues. Positions 585 to 594 (PPEKAQKETE) are enriched in basic and acidic residues. The PI-PLC Y-box domain occupies 599-715 (ISALVNYVQP…GYLLKPEFMR (117 aa)). S628 and R655 together coordinate substrate. A C2 domain is found at 715–843 (RRSDRRLDPF…NLRSEVGQPI (129 aa)). 2 disordered regions span residues 1080-1112 (LDLG…TQES) and 1296-1318 (GSHS…EMKT). Residues 1088–1107 (ESAAADAGEDLAGGSSSLDG) are compositionally biased toward low complexity.

Expressed in neuronal cell bodies of the optic lobe, central brain, and thoracic ganglia in adults, and the brain of larvae.

It carries out the reaction a 1,2-diacyl-sn-glycero-3-phospho-(1D-myo-inositol-4,5-bisphosphate) + H2O = 1D-myo-inositol 1,4,5-trisphosphate + a 1,2-diacyl-sn-glycerol + H(+). Its function is as follows. The production of the second messenger molecules diacylglycerol (DAG) and inositol 1,4,5-trisphosphate (IP3) is mediated by activated phosphatidylinositol-specific phospholipase C enzymes. The polypeptide is 1-phosphatidylinositol 4,5-bisphosphate phosphodiesterase classes I and II (Plc21C) (Drosophila melanogaster (Fruit fly)).